The chain runs to 135 residues: Large ribosomal subunit protein eL27 (135 aa).

It belongs to the eukaryotic ribosomal protein eL27 family.

The chain is Large ribosomal subunit protein eL27 (RPL27) from Pisum sativum (Garden pea).